A 110-amino-acid chain; its full sequence is UPF0060 membrane protein Psyr_3752 (110 aa).

Helical transmembrane passes span 5–25 (LWFF…WLWL), 28–48 (GKSA…ALLL), 59–79 (AYAA…GLVE), and 84–104 (LGTD…ILLG).

It belongs to the UPF0060 family.

It is found in the cell inner membrane. The chain is UPF0060 membrane protein Psyr_3752 from Pseudomonas syringae pv. syringae (strain B728a).